A 517-amino-acid polypeptide reads, in one-letter code: UDP-N-acetylmuramyl-tripeptide synthetase (517 aa).

Residue S38 coordinates UDP-N-acetyl-alpha-D-muramoyl-L-alanyl-D-glutamate. 116–122 contributes to the ATP binding site; the sequence is GTKGKTT. Residues N160, 162–163, S189, and R197 each bind UDP-N-acetyl-alpha-D-muramoyl-L-alanyl-D-glutamate; that span reads TT. K231 carries the post-translational modification N6-carboxylysine.

It belongs to the MurCDEF family. MurE subfamily. Carboxylation is probably crucial for Mg(2+) binding and, consequently, for the gamma-phosphate positioning of ATP.

The protein resides in the cytoplasm. It participates in cell wall biogenesis; peptidoglycan biosynthesis. Functionally, catalyzes the addition of an amino acid to the nucleotide precursor UDP-N-acetylmuramoyl-L-alanyl-D-glutamate (UMAG) in the biosynthesis of bacterial cell-wall peptidoglycan. This is UDP-N-acetylmuramyl-tripeptide synthetase from Lacticaseibacillus paracasei (strain ATCC 334 / BCRC 17002 / CCUG 31169 / CIP 107868 / KCTC 3260 / NRRL B-441) (Lactobacillus paracasei).